A 353-amino-acid chain; its full sequence is Histidinol-phosphate aminotransferase (353 aa).

Lys-211 carries the post-translational modification N6-(pyridoxal phosphate)lysine.

Belongs to the class-II pyridoxal-phosphate-dependent aminotransferase family. Histidinol-phosphate aminotransferase subfamily. As to quaternary structure, homodimer. Pyridoxal 5'-phosphate is required as a cofactor.

It carries out the reaction L-histidinol phosphate + 2-oxoglutarate = 3-(imidazol-4-yl)-2-oxopropyl phosphate + L-glutamate. Its pathway is amino-acid biosynthesis; L-histidine biosynthesis; L-histidine from 5-phospho-alpha-D-ribose 1-diphosphate: step 7/9. The protein is Histidinol-phosphate aminotransferase of Klebsiella pneumoniae (strain 342).